Consider the following 214-residue polypeptide: Glycerol-3-phosphate acyltransferase (214 aa).

5 helical membrane-spanning segments follow: residues 8–28 (LILAYLLGSIPTGLWIGQIFF), 70–90 (LLPLFLHINGISPMIFGLIAV), 111–131 (AGVVLGFSPLFFSYLIIIFIV), 144–164 (IVVAGFAIISVLIFPLLGIIL), and 165–185 (PSYDLLFTLIIILLASIILIR).

This sequence belongs to the PlsY family. In terms of assembly, probably interacts with PlsX.

The protein localises to the cell membrane. It catalyses the reaction an acyl phosphate + sn-glycerol 3-phosphate = a 1-acyl-sn-glycero-3-phosphate + phosphate. The protein operates within lipid metabolism; phospholipid metabolism. Functionally, catalyzes the transfer of an acyl group from acyl-phosphate (acyl-PO(4)) to glycerol-3-phosphate (G3P) to form lysophosphatidic acid (LPA). This enzyme utilizes acyl-phosphate as fatty acyl donor, but not acyl-CoA or acyl-ACP. In Streptococcus gordonii (strain Challis / ATCC 35105 / BCRC 15272 / CH1 / DL1 / V288), this protein is Glycerol-3-phosphate acyltransferase.